We begin with the raw amino-acid sequence, 1119 residues long: DNA-directed RNA polymerase D subunit 2b (1119 aa).

Position 732 (aspartate 732) interacts with Mg(2+). Zn(2+)-binding residues include cysteine 1055, cysteine 1058, cysteine 1080, and cysteine 1083. Residues cysteine 1055–cysteine 1083 form a C4-type zinc finger.

The protein belongs to the RNA polymerase beta chain family. As to quaternary structure, component of the RNA polymerase IVa and IVb (Pol IV) complexes.

Its subcellular location is the nucleus. The enzyme catalyses RNA(n) + a ribonucleoside 5'-triphosphate = RNA(n+1) + diphosphate. Its function is as follows. DNA-dependent RNA polymerase catalyzes the transcription of DNA into RNA using the four ribonucleoside triphosphates as substrates. Second largest component of RNA polymerase IVa and IVb which mediate short-interfering RNAs (siRNA) accumulation and subsequent RNA-directed DNA methylation-dependent (RdDM) silencing of endogenous repeated sequences, including transposable largest subunit. Also required for full erasure of methylation elements. Required for intercellular RNA interference (RNAi) leading to systemic post-transcriptional gene silencing. The protein is DNA-directed RNA polymerase D subunit 2b (NRPD2b) of Arabidopsis thaliana (Mouse-ear cress).